Consider the following 463-residue polypeptide: Argininosuccinate lyase (463 aa).

This sequence belongs to the lyase 1 family. Argininosuccinate lyase subfamily.

It localises to the cytoplasm. It catalyses the reaction 2-(N(omega)-L-arginino)succinate = fumarate + L-arginine. It functions in the pathway amino-acid biosynthesis; L-arginine biosynthesis; L-arginine from L-ornithine and carbamoyl phosphate: step 3/3. This is Argininosuccinate lyase from Streptococcus pneumoniae (strain 70585).